The following is a 287-amino-acid chain: Lys-63-specific deubiquitinase (287 aa).

The MPN domain maps to 33-176; that stretch reads VHLESDAFLV…YTCFQSVQAQ (144 aa). 3 residues coordinate Zn(2+): H119, H121, and D132. Positions 119-132 match the JAMM motif motif; it reads HSHPHITVWPSHVD. Residues 256 to 283 adopt a coiled-coil conformation; the sequence is LQWLEDRLEQNKQSIITLQKEKELLTQE.

Belongs to the peptidase M67A family. BRCC36 subfamily. Monomer. Homodimer. Component of the BRISC complex, at least composed of abraxas2, brcc3, babam1 and babam2. Interacts with abraxas2; the interaction is direct and may form a heterotetramer. Component of the BRCA1-A complex. Both the BRCA1-A complex and the BRISC complex bind polyubiquitin. Requires Zn(2+) as cofactor.

The protein resides in the nucleus. It is found in the cytoplasm. It localises to the cytoskeleton. The protein localises to the spindle pole. Metalloprotease that specifically cleaves 'Lys-63'-linked polyubiquitin chains, leaving the last ubiquitin chain attached to its substrates. Catalytic subunit of the BRISC complex, a multiprotein complex that specifically cleaves 'Lys-63'-linked ubiquitin in various substrates; brcc3 does not have activity by itself, but needs to be associated into a higher-order assembly, for minimal in vitro activity. The sequence is that of Lys-63-specific deubiquitinase from Danio rerio (Zebrafish).